A 376-amino-acid polypeptide reads, in one-letter code: Aminomethyltransferase (376 aa).

Belongs to the GcvT family. As to quaternary structure, the glycine cleavage system is composed of four proteins: P, T, L and H.

It catalyses the reaction N(6)-[(R)-S(8)-aminomethyldihydrolipoyl]-L-lysyl-[protein] + (6S)-5,6,7,8-tetrahydrofolate = N(6)-[(R)-dihydrolipoyl]-L-lysyl-[protein] + (6R)-5,10-methylene-5,6,7,8-tetrahydrofolate + NH4(+). In terms of biological role, the glycine cleavage system catalyzes the degradation of glycine. The sequence is that of Aminomethyltransferase from Nostoc sp. (strain PCC 7120 / SAG 25.82 / UTEX 2576).